The following is a 583-amino-acid chain: Aspartate--tRNA ligase (583 aa).

Glu174 serves as a coordination point for L-aspartate. Residues 198–201 (QITK) are aspartate. L-aspartate is bound at residue Arg220. ATP contacts are provided by residues 220–222 (RDE) and Gln229. His443 is a binding site for L-aspartate. Glu477 provides a ligand contact to ATP. Residue Arg484 coordinates L-aspartate. An ATP-binding site is contributed by 529–532 (GLDR).

The protein belongs to the class-II aminoacyl-tRNA synthetase family. Type 1 subfamily. In terms of assembly, homodimer.

The protein resides in the cytoplasm. It catalyses the reaction tRNA(Asp) + L-aspartate + ATP = L-aspartyl-tRNA(Asp) + AMP + diphosphate. Catalyzes the attachment of L-aspartate to tRNA(Asp) in a two-step reaction: L-aspartate is first activated by ATP to form Asp-AMP and then transferred to the acceptor end of tRNA(Asp). The polypeptide is Aspartate--tRNA ligase (Streptococcus thermophilus (strain ATCC BAA-491 / LMD-9)).